The sequence spans 112 residues: Large ribosomal subunit protein P2 (112 aa).

Low complexity predominate over residues 69–85; sequence AGGAAMPAAAAGGAPAA. Residues 69–112 form a disordered region; the sequence is AGGAAMPAAAAGGAPAAAEDKAEAKKPEAEPEEEEDDMGFSLFD. Basic and acidic residues predominate over residues 86-97; the sequence is AEDKAEAKKPEA.

This sequence belongs to the eukaryotic ribosomal protein P1/P2 family. P1 and P2 exist as dimers at the large ribosomal subunit. In terms of processing, phosphorylated.

Plays an important role in the elongation step of protein synthesis. This is Large ribosomal subunit protein P2 from Babesia bovis.